The sequence spans 391 residues: Apolipoprotein A-IV (391 aa).

Positions 1–20 (MFLKAVVLTVALVAITGTQA) are cleaved as a signal peptide. A run of 13 repeats spans residues 33–54 (DYFT…KTDV), 60–81 (TLFQ…NKLV), 82–103 (PFAV…EEIQ), 115–136 (PHAN…EHLR), 137–158 (PYAT…RQLT), 159–180 (PYIQ…SSMV), 181–202 (PFAN…GQLT), 203–224 (PRAN…SRLA), 225–246 (PLAE…FQMK), 247–268 (KNAE…KNLA), 269–286 (PLVE…EGLQ), 287–308 (KSLE…RAVE), and 309–330 (PLGD…QQLG). The segment at 33-330 (DYFTQLSNNA…QMEKFRQQLG (298 aa)) is 13 X 22 AA approximate tandem repeats. Ser-333 bears the Phosphoserine mark. Positions 354-391 (FMSTLQKKGSPDQPLALPLPEQVQEQVQEQVQPKPLES) are disordered. Over residues 371-391 (PLPEQVQEQVQEQVQPKPLES) the composition is skewed to low complexity.

The protein belongs to the apolipoprotein A1/A4/E family. As to quaternary structure, homodimer. As to expression, secreted in plasma.

Its subcellular location is the secreted. In terms of biological role, may have a role in chylomicrons and VLDL secretion and catabolism. Required for efficient activation of lipoprotein lipase by ApoC-II; potent activator of LCAT. Apoa-IV is a major component of HDL and chylomicrons. The sequence is that of Apolipoprotein A-IV (Apoa4) from Rattus norvegicus (Rat).